Consider the following 565-residue polypeptide: Sulfite reductase [NADPH] hemoprotein beta-component (565 aa).

Residues cysteine 429, cysteine 435, cysteine 474, and cysteine 478 each coordinate [4Fe-4S] cluster. Cysteine 478 provides a ligand contact to siroheme.

This sequence belongs to the nitrite and sulfite reductase 4Fe-4S domain family. Alpha(8)-beta(8). The alpha component is a flavoprotein, the beta component is a hemoprotein. Requires siroheme as cofactor. The cofactor is [4Fe-4S] cluster.

The catalysed reaction is hydrogen sulfide + 3 NADP(+) + 3 H2O = sulfite + 3 NADPH + 4 H(+). It participates in sulfur metabolism; hydrogen sulfide biosynthesis; hydrogen sulfide from sulfite (NADPH route): step 1/1. In terms of biological role, component of the sulfite reductase complex that catalyzes the 6-electron reduction of sulfite to sulfide. This is one of several activities required for the biosynthesis of L-cysteine from sulfate. This Shewanella baltica (strain OS223) protein is Sulfite reductase [NADPH] hemoprotein beta-component.